The primary structure comprises 82 residues: Cyclin-dependent kinases regulatory subunit (82 aa).

Belongs to the CKS family. As to quaternary structure, forms a homohexamer that can probably bind six kinase subunits.

Functionally, binds to the catalytic subunit of the cyclin dependent kinases and is essential for their biological function. The chain is Cyclin-dependent kinases regulatory subunit (cks1) from Dictyostelium discoideum (Social amoeba).